The chain runs to 474 residues: ATP synthase subunit beta (474 aa).

158-165 (GGAGVGKT) is a binding site for ATP.

Belongs to the ATPase alpha/beta chains family. As to quaternary structure, F-type ATPases have 2 components, CF(1) - the catalytic core - and CF(0) - the membrane proton channel. CF(1) has five subunits: alpha(3), beta(3), gamma(1), delta(1), epsilon(1). CF(0) has three main subunits: a(1), b(2) and c(9-12). The alpha and beta chains form an alternating ring which encloses part of the gamma chain. CF(1) is attached to CF(0) by a central stalk formed by the gamma and epsilon chains, while a peripheral stalk is formed by the delta and b chains.

Its subcellular location is the cell membrane. It catalyses the reaction ATP + H2O + 4 H(+)(in) = ADP + phosphate + 5 H(+)(out). Its function is as follows. Produces ATP from ADP in the presence of a proton gradient across the membrane. The catalytic sites are hosted primarily by the beta subunits. In Tropheryma whipplei (strain Twist) (Whipple's bacillus), this protein is ATP synthase subunit beta.